A 370-amino-acid chain; its full sequence is MKRVGLIGWRGMVGSVLMQRMLEERDFDLIEPVFFTTSNVGGQGPEVGKDIAPLKDAYSIDELKTLDVILTCQGGDYTSEVFPKLREAGWQGYWIDAASSLRMEDDAVIVLDPVNRKVIDQALDAGTRNYIGGNCTVSLMLMALGGLFDAGLVEWMSAMTYQAASGAGAQNMRELLKQMGAAHASVADDLANPASAILDIDRKVAETLRSEAFPTEHFGAPLGGSLIPWIDKELPNGQSREEWKAQAETNKILARFKNPIPVDGICVRVGAMRCHSQALTIKLNKDVPLTDIEGLISQHNPWVKLVPNHREVSVRELTPAAVTGTLSVPVGRLRKLNMGSQYLGAFTVGDQLLWGAAEPLRRMLRILLER.

NADP(+) is bound by residues 10 to 13 (RGMV), 37 to 38 (TS), and Q73. R102 serves as a coordination point for phosphate. C135 acts as the Acyl-thioester intermediate in catalysis. Q162 is a substrate binding site. Residues 165–166 (SG) and P193 each bind NADP(+). E241 provides a ligand contact to substrate. Residue K244 coordinates phosphate. R268 is a binding site for substrate. The Proton acceptor role is filled by H275. Q351 lines the NADP(+) pocket.

This sequence belongs to the aspartate-semialdehyde dehydrogenase family. In terms of assembly, homodimer.

The catalysed reaction is L-aspartate 4-semialdehyde + phosphate + NADP(+) = 4-phospho-L-aspartate + NADPH + H(+). It functions in the pathway amino-acid biosynthesis; L-lysine biosynthesis via DAP pathway; (S)-tetrahydrodipicolinate from L-aspartate: step 2/4. Its pathway is amino-acid biosynthesis; L-methionine biosynthesis via de novo pathway; L-homoserine from L-aspartate: step 2/3. It participates in amino-acid biosynthesis; L-threonine biosynthesis; L-threonine from L-aspartate: step 2/5. Catalyzes the NADPH-dependent formation of L-aspartate-semialdehyde (L-ASA) by the reductive dephosphorylation of L-aspartyl-4-phosphate. The sequence is that of Aspartate-semialdehyde dehydrogenase (asd) from Pseudomonas aeruginosa (strain ATCC 15692 / DSM 22644 / CIP 104116 / JCM 14847 / LMG 12228 / 1C / PRS 101 / PAO1).